An 87-amino-acid chain; its full sequence is Phytosulfokines 1 (87 aa).

The N-terminal stretch at 1-24 is a signal peptide; sequence MMKTKSEVLIFFFTLVLLLSMASS. Residues 25–76 constitute a propeptide that is removed on maturation; that stretch reads VILREDGFAPPKPSPTTHEKASTKGDRDGVECKNSDSEEECLVKKTVAAHTD. The segment at 31 to 59 is disordered; it reads GFAPPKPSPTTHEKASTKGDRDGVECKNS. Residues 41-59 are compositionally biased toward basic and acidic residues; sequence THEKASTKGDRDGVECKNS. Sulfotyrosine occurs at positions 77 and 79. Residues 82–87 constitute a propeptide that is removed on maturation; it reads DLNLSP.

The protein belongs to the phytosulfokine family. Sulfation is important for activity and for the binding to a putative membrane receptor. Post-translationally, PSK-beta is produced from PSK-alpha by exopeptidase digestion. As to expression, expressed only in roots.

Its subcellular location is the secreted. Its function is as follows. Promotes plant cell differentiation, organogenesis and somatic embryogenesis as well as cell proliferation. The sequence is that of Phytosulfokines 1 (PSK1) from Arabidopsis thaliana (Mouse-ear cress).